The following is a 221-amino-acid chain: Serine/arginine-rich splicing factor 2 (221 aa).

S2 carries the post-translational modification N-acetylserine. S2 bears the Phosphoserine mark. Residues 14–92 (TSLKVDNLTY…RELRVQMARY (79 aa)) form the RRM domain. Residues T22 and T25 each carry the phosphothreonine modification. A Phosphoserine modification is found at S26. K52 is subject to N6-acetyllysine. Residues 92-221 (YGRPPDSHHS…SPEEEGAVSS (130 aa)) form a disordered region. Basic residues-rich tracts occupy residues 117-171 (RRSR…RSKS) and 179-189 (SRSRSRSRSRS). Phosphoserine is present on residues S189, S191, S204, S206, S208, S212, and S220.

This sequence belongs to the splicing factor SR family. In terms of assembly, interacts with CCNL1 and CCNL2. Interacts with SCAF11. Interacts with ZRSR2/U2AF1-RS2. Interacts with CCDC55 (via C-terminus). In vitro, self-associates and binds SRSF1/SFRS1 (ASF/SF2), SNRNP70 and U2AF1 but not U2AF2. Binds SREK1/SFRS12. Interacts with BRDT. Extensively phosphorylated on serine residues in the RS domain. Phosphorylated by SRPK2 and this causes its redistribution from the nuclear speckle to nucleoplasm and controls cell fate decision in response to cisplatin treatment. KAT5/TIP60 inhibits its phosphorylation by preventing SRPK2 nuclear translocation. In terms of processing, acetylation on Lys-52 by KAT5/TIP60 promotes its proteasomal degradation. This effect is counterbalanced by HDAC6, which positively controls SRSF2 protein level by deacetylating it and preventing its proteasomal degradation. Expressed in all the tissues examined; liver, kidney, spleen, heart, lung and brain.

Its subcellular location is the nucleus. The protein localises to the nucleoplasm. The protein resides in the nucleus speckle. Necessary for the splicing of pre-mRNA. It is required for formation of the earliest ATP-dependent splicing complex and interacts with spliceosomal components bound to both the 5'- and 3'-splice sites during spliceosome assembly. It also is required for ATP-dependent interactions of both U1 and U2 snRNPs with pre-mRNA. Can bind to the myelin basic protein (MBP) gene MB3 regulatory region and increase transcription of the mbp promoter in cells derived from the CNS. The phosphorylated form (by SRPK2) is required for cellular apoptosis in response to cisplatin treatment. The protein is Serine/arginine-rich splicing factor 2 (Srsf2) of Mus musculus (Mouse).